Here is a 158-residue protein sequence, read N- to C-terminus: Large ribosomal subunit protein uL15 (158 aa).

The protein belongs to the universal ribosomal protein uL15 family. As to quaternary structure, part of the 50S ribosomal subunit.

Functionally, binds to the 23S rRNA. This chain is Large ribosomal subunit protein uL15, found in Aeropyrum pernix (strain ATCC 700893 / DSM 11879 / JCM 9820 / NBRC 100138 / K1).